The following is a 466-amino-acid chain: MKRQLKLFFIVLITAVVASALTLFITGNSSILGQKSASTGDSKFDKLNKAYEQIKSDYYQKTDDDKLVDGAIKGMIQSLDDPYSTYMDQEQAKSFDETISASFEGIGAQVEEKDGEILIVSPIKGSPAEKAGIKPRDQIIKVNGKSVKGMNVNEAVALIRGKKGTKVKLELNRAGVGNIDLSIKRDTIPVETVYSEMKDNNIGEIQITSFSETTAKELTDAIDSLEKKGAKGYILDLRGNPGGLMEQAITMSNLFIDKGKNIMQVEYKNGSKEVMKAEKERKVTKPTVVLVNDGTASAAEIMAAALHESSNVPLIGETTFGKGTVQTAKEYDDGSTVKLTVAKWLTADGEWIHKKGIKPQVKAELPDYAKLPYLDADKTYKSGDTGTNVKVAQKMLKALGYKVKVNSMYDQDFVSVVKQFQKKEKLNETGILTGDTTTKLMIELQKKLSDNDTQMEKAIETLKKEM.

An N-terminal signal peptide occupies residues 1 to 36; it reads MKRQLKLFFIVLITAVVASALTLFITGNSSILGQKS. Positions 96 to 174 constitute a PDZ domain; the sequence is DETISASFEG…TKVKLELNRA (79 aa). Active-site charge relay system residues include Ser-297, Glu-308, and Lys-322.

It belongs to the peptidase S41A family.

It catalyses the reaction The enzyme shows specific recognition of a C-terminal tripeptide, Xaa-Yaa-Zaa, in which Xaa is preferably Ala or Leu, Yaa is preferably Ala or Tyr, and Zaa is preferably Ala, but then cleaves at a variable distance from the C-terminus. A typical cleavage is -Ala-Ala-|-Arg-Ala-Ala-Lys-Glu-Asn-Tyr-Ala-Leu-Ala-Ala.. The polypeptide is Carboxy-terminal processing protease CtpA (ctpA) (Bacillus subtilis (strain 168)).